The primary structure comprises 127 residues: Protein chibby homolog 1 (127 aa).

A compositionally biased stretch (polar residues) spans 1 to 10; the sequence is MPLFGSTFSP. The interval 1-26 is disordered; it reads MPLFGSTFSPKKTPPRKSASLSNLHN. Phosphoserine occurs at positions 9 and 20. Positions 60 to 112 are minimal region for the interaction with PKD2; that stretch reads IAETGISGGVDRREAQRLRRRNQQLEEENNLLRLKVDILLDMLSETTAESHLM. Residues 68 to 125 are a coiled coil; it reads GVDRREAQRLRRRNQQLEEENNLLRLKVDILLDMLSETTAESHLMEKELDELKSVSRR. The tract at residues 77–98 is leucine-zipper; mediates homodimerization; it reads LRRRNQQLEEENNLLRLKVDIL.

This sequence belongs to the chibby family. As to quaternary structure, homodimer. Homodimerization is essential for nuclear localization and interaction with KPNA4 but is dispensable for interaction with CTNNB1. Interacts with polycystin-2/PKD2 and GM130. Interacts with the C-terminal region of CTNNB1. Interacts (C-terminus) with TCIM (C-terminus), TCIM competes with CTNNB1 for the interaction with CBY1. Interacts with FAM92A; this interaction facilitates targeting of FAM92A to cilium basal body. Interacts with CIBAR2. Interacts with KPNA4.

It localises to the nucleus speckle. The protein resides in the cytoplasm. The protein localises to the cytoskeleton. Its subcellular location is the cilium basal body. It is found in the microtubule organizing center. It localises to the centrosome. The protein resides in the centriole. The protein localises to the golgi apparatus. Its subcellular location is the trans-Golgi network. It is found in the cell projection. It localises to the cilium. The protein resides in the flagellum. The protein localises to the nucleus. Inhibits the Wnt/Wingless pathway by binding to CTNNB1/beta-catenin and inhibiting beta-catenin-mediated transcriptional activation through competition with TCF/LEF transcription factors. Has also been shown to play a role in regulating the intracellular trafficking of polycystin-2/PKD2 and possibly of other intracellular proteins. Promotes adipocyte and cardiomyocyte differentiation. This is Protein chibby homolog 1 (CBY1) from Bos taurus (Bovine).